A 362-amino-acid chain; its full sequence is Transcription factor bHLH128 (362 aa).

The span at 1–16 (MYQSSSSTSSSSQRSS) shows a compositional bias: low complexity. Disordered regions lie at residues 1–23 (MYQS…GGGL), 78–106 (SDST…SNKD), 120–140 (SQQH…YSLA), and 162–184 (LNQP…HSRL). Over residues 78–96 (SDSTTCGVNNSSDGQKQLG) the composition is skewed to polar residues. Over residues 162-173 (LNQPTSDYSPQG) the composition is skewed to polar residues. A Phosphoserine modification is found at Ser189. The region spanning 289–339 (CATHPRSIAERERRTRISGKLKKLQDLVPNMDKQTSYSDMLDLAVQHIKGL) is the bHLH domain.

In terms of assembly, homodimer.

It is found in the nucleus. The chain is Transcription factor bHLH128 (BHLH128) from Arabidopsis thaliana (Mouse-ear cress).